The primary structure comprises 201 residues: Extracellular superoxide dismutase [Cu-Zn] (201 aa).

A signal peptide spans 1–42 (MINSFIVIFLSFLIFINYANLVCVEATHVYGRRSHSNGMHGN). His89, His91, and His106 together coordinate Cu cation. Cys100 and Cys192 are joined by a disulfide. Zn(2+)-binding residues include His106, His114, His123, and Asp126. Cu cation is bound at residue His163.

This sequence belongs to the Cu-Zn superoxide dismutase family. In terms of assembly, homodimer. The cofactor is Cu cation. Zn(2+) is required as a cofactor.

It is found in the secreted. The protein resides in the extracellular space. The enzyme catalyses 2 superoxide + 2 H(+) = H2O2 + O2. Its function is as follows. Destroys radicals which are normally produced within the cells and which are toxic to biological systems. May act in the parasite defense against phagocyte-generated reactive oxygen species. The chain is Extracellular superoxide dismutase [Cu-Zn] (sod-4) from Onchocerca volvulus.